We begin with the raw amino-acid sequence, 111 residues long: MNFSECPLVISACKKFLQKRITIENEALINALITALAQTTTLNELCLLPIQTYLLSYKNAFEWIHFVCIAITTILDNKYNWKDCTVDINYIFLHVTYIYTIKTKEYLDYCS.

It belongs to the asfivirus E111R family.

This is an uncharacterized protein from African swine fever virus (isolate Pig/Kenya/KEN-50/1950) (ASFV).